Here is a 585-residue protein sequence, read N- to C-terminus: MEEVFRFYSNSRNIFIHKSLSLKPSTIDDPKSGYGLFVEPSKFKNDELKSETIQLLRIPKRCTFNINTLLALLGDEDEFSSKEEFQRTNDKIKIALREIMAHPNFSVFLTETNLLIIYFMIFQTIRSRYEIPENIQYYLENVLMSIEVETAMDSIENLATDYGHYPQIFGLRETLNLFKELFHDVLNLSDIKHLYSAIISRCLEIPERADTKSEEFTVHSTLVPIVDFANHEGTQKNAYFDIDPSNNDVLLLLDTKAVQSELTKPIEVFISYSPTEDLFSMLVTYGFTPDFRGNSQFWTVSFDRCFLRNYDGPDKTTNLRLFYKWMHINPVVPLVKYEHNGKTRWFLNDTTPEFDMLLLPFIPSIDDGKIARWAYDSTCHLMFTKIHCLINPEANEHALMIAENYRSLIKEKESNGDDFINLPPLAWSLRYKDTENDCVRQRHICSEDAVAVLKQEEMQDSTKTKSQFTSFFRKFLEFRRSKIIRPTSDSKVASILYQQELEIIADLAKAIDSSSTIFFSDLNVTLDTEPERLPPLRFLDDYIEISADKQEPSPICEDLSYYTPSRFTDFFQEEVSQYAAFFQDD.

The 256-residue stretch at 18-273 (KSLSLKPSTI…KPIEVFISYS (256 aa)) folds into the SET domain. The SET-like stretch occupies residues 186–288 (LNLSDIKHLY…FSMLVTYGFT (103 aa)).

Belongs to the class V-like SAM-binding methyltransferase superfamily.

Its subcellular location is the cytoplasm. It is found in the cytosol. The enzyme catalyses L-lysyl-[cytochrome c] + S-adenosyl-L-methionine = N(6)-methyl-L-lysyl-[cytochrome c] + S-adenosyl-L-homocysteine + H(+). Its function is as follows. Methyltransferase which mediates trimethylation of 'Lys-78' of cytochrome c (CYC1). The protein is Cytochrome c lysine N-methyltransferase 1 (CTM1) of Saccharomyces cerevisiae (strain ATCC 204508 / S288c) (Baker's yeast).